A 212-amino-acid polypeptide reads, in one-letter code: Protein ERP5 (212 aa).

An N-terminal signal peptide occupies residues 1-20 (MKYNIVHGICLLFAITQAVG). Residues 21–178 (AVHFYAKSGE…FRNQSESANS (158 aa)) are Lumenal-facing. Residues 31–124 (TKCFYEHLSR…TLRVFIELEI (94 aa)) form the GOLD domain. N-linked (GlcNAc...) asparagine glycosylation is present at asparagine 171. The helical transmembrane segment at 179–199 (KIMTWSVFQLLILLGTCAFQL) threads the bilayer. Over 200–212 (RYLKNFFVKQKVV) the chain is Cytoplasmic.

This sequence belongs to the EMP24/GP25L family.

Its subcellular location is the endoplasmic reticulum membrane. In terms of biological role, involved in vesicular protein trafficking. The polypeptide is Protein ERP5 (ERP5) (Saccharomyces cerevisiae (strain ATCC 204508 / S288c) (Baker's yeast)).